A 471-amino-acid chain; its full sequence is Ribulose bisphosphate carboxylase large chain (471 aa).

Substrate is bound by residues Asn115 and Thr165. Residue Lys167 is the Proton acceptor of the active site. Lys169 contributes to the substrate binding site. Mg(2+)-binding residues include Lys193, Asp195, and Glu196. Residue Lys193 is modified to N6-carboxylysine. His286 functions as the Proton acceptor in the catalytic mechanism. Residues Arg287, His319, and Ser371 each contribute to the substrate site.

It belongs to the RuBisCO large chain family. Type I subfamily. Heterohexadecamer of 8 large chains and 8 small chains. Mg(2+) serves as cofactor.

Its subcellular location is the carboxysome. It catalyses the reaction 2 (2R)-3-phosphoglycerate + 2 H(+) = D-ribulose 1,5-bisphosphate + CO2 + H2O. The catalysed reaction is D-ribulose 1,5-bisphosphate + O2 = 2-phosphoglycolate + (2R)-3-phosphoglycerate + 2 H(+). Its function is as follows. RuBisCO catalyzes two reactions: the carboxylation of D-ribulose 1,5-bisphosphate, the primary event in carbon dioxide fixation, as well as the oxidative fragmentation of the pentose substrate in the photorespiration process. Both reactions occur simultaneously and in competition at the same active site. This chain is Ribulose bisphosphate carboxylase large chain, found in Synechococcus sp. (strain RCC307).